The chain runs to 433 residues: GTPase Der (433 aa).

EngA-type G domains lie at 3–167 (NIVA…QDTI) and 174–349 (PKIA…TNKT). GTP contacts are provided by residues 9–16 (GRPNVGKS), 56–60 (DTGGY), 119–122 (NKAD), 180–187 (GRPNVGKS), 227–231 (DTAGI), and 292–295 (NKWD). In terms of domain architecture, KH-like spans 350-433 (QKISTAALNQ…VPVQLVFRKK (84 aa)).

This sequence belongs to the TRAFAC class TrmE-Era-EngA-EngB-Septin-like GTPase superfamily. EngA (Der) GTPase family. Associates with the 50S ribosomal subunit.

In terms of biological role, GTPase that plays an essential role in the late steps of ribosome biogenesis. The sequence is that of GTPase Der from Amoebophilus asiaticus (strain 5a2).